The sequence spans 162 residues: Phosphopantetheine adenylyltransferase (162 aa).

Residue Thr-14 coordinates substrate. ATP contacts are provided by residues 14-15 (TF) and His-22. Positions 46, 78, and 92 each coordinate substrate. Residues 93-95 (GLR), Glu-103, and 128-134 (HSFISSS) contribute to the ATP site.

The protein belongs to the bacterial CoaD family. In terms of assembly, homohexamer. Mg(2+) serves as cofactor.

It localises to the cytoplasm. The catalysed reaction is (R)-4'-phosphopantetheine + ATP + H(+) = 3'-dephospho-CoA + diphosphate. Its pathway is cofactor biosynthesis; coenzyme A biosynthesis; CoA from (R)-pantothenate: step 4/5. Reversibly transfers an adenylyl group from ATP to 4'-phosphopantetheine, yielding dephospho-CoA (dPCoA) and pyrophosphate. This chain is Phosphopantetheine adenylyltransferase, found in Xylella fastidiosa (strain 9a5c).